A 467-amino-acid chain; its full sequence is Probable apyrase 2 (467 aa).

The Cytoplasmic segment spans residues 1–25; it reads MRRYSALPGGGARPDTLADRLHRYR. The helical; Signal-anchor for type II membrane protein transmembrane segment at 26-46 threads the bilayer; the sequence is GVLLVILAPLALVSLVLLLMP. Over 47-467 the chain is Extracellular; the sequence is RSPASSSAAA…PLGSAIEVAS (421 aa). 70-80 provides a ligand contact to ATP; it reads VIFDAGSSGSR. Glu-192 (proton acceptor) is an active-site residue. 216 to 226 is an ATP binding site; that stretch reads GVVDLGGGSVQ.

It belongs to the GDA1/CD39 NTPase family. The cofactor is Ca(2+).

Its subcellular location is the membrane. The enzyme catalyses a ribonucleoside 5'-triphosphate + 2 H2O = a ribonucleoside 5'-phosphate + 2 phosphate + 2 H(+). Catalyzes the hydrolysis of phosphoanhydride bonds of nucleoside tri- and di-phosphates. This chain is Probable apyrase 2 (APY2), found in Oryza sativa subsp. japonica (Rice).